A 345-amino-acid chain; its full sequence is MSTPTQLSYKDAGVDIDAGNALVDNIKTAVKRTHRPEVMGNLGGFGALCELPTKYKHPVLVSGTDGVGTKLRLAIDYKKHDTVGIDLVAMCSNDLIVSGAEPLFFLDYYATGKLDVDAATAVVKGIAEGCVQSGCALIGGETAEMPGMYEGDDYDLAGFCVGVVEKEEIIDGTKVVAGDSLIALGASGPHSNGFSLIRKVLEVSGANPEQELEGKALIDHLLEPTKIYVKSLLKLLEQTEVHAMAHITGGGFWENIPRVLPDDCKAVIQGDSWQWPSIFNWLMENGNIAEFEMYRTFNCGVGMVVALPSDKVEAALTLLNAEGEKAWLIGEIAKRDDSEEQVEIL.

It belongs to the AIR synthase family.

It is found in the cytoplasm. It catalyses the reaction 2-formamido-N(1)-(5-O-phospho-beta-D-ribosyl)acetamidine + ATP = 5-amino-1-(5-phospho-beta-D-ribosyl)imidazole + ADP + phosphate + H(+). It functions in the pathway purine metabolism; IMP biosynthesis via de novo pathway; 5-amino-1-(5-phospho-D-ribosyl)imidazole from N(2)-formyl-N(1)-(5-phospho-D-ribosyl)glycinamide: step 2/2. The protein is Phosphoribosylformylglycinamidine cyclo-ligase of Shewanella woodyi (strain ATCC 51908 / MS32).